The chain runs to 633 residues: MSEAPRIQLLSPRLANQIAAGEVVERPASVAKELLENSLDAGARRIDVEVEQGGVKLLRVRDDGRGIPADDLPLALARHATSKIRELEDLERVMSLGFRGEALASISSVARLTMTSRTADAGEAWQVETEGRDMQPRVQPAAHPVGTSVEVRDLFFNTPARRKFLRAEKTEFDHLQEVIKRLALARFDVAFHLRHNGKTIFALHEARDELARARRVGAVCGQAFLEQALPIEVERNGLHLWGWVGLPTFSRSQPDLQYFYVNGRMVRDKLVAHAVRQAYRDVLYNGRHPTFVLFFEVDPAVVDVNVHPTKHEVRFRDSRMVHDFLYGTLHRALGEVRPDDQLAPPGATSLTEPRPTGAAAGEFGPQGEMRLAESVLESPAARVGWSGGASSSGASSGYSAYTRPEAPPSLAEAGGAYKAYFAPLPAGEAPAALPESAQDIPPLGYALAQLKGIYILAENAHGLVLVDMHAAHERITYERLKVAMASEGLRGQPLLVPESIAVSEREADCAEEHSGWFQRLGFELQRLGPETLAIRQIPALLKQAEATQLVRDVIADLLEYGTSDRIQAHLNELLGTMACHGAVRANRRLTLPEMNALLRDMEITERSGQCNHGRPTWTQLGLDELDKLFLRGR.

Disordered regions lie at residues valine 336–glycine 364 and glycine 384–glutamate 405. Positions glycine 388–tyrosine 401 are enriched in low complexity.

This sequence belongs to the DNA mismatch repair MutL/HexB family.

In terms of biological role, this protein is involved in the repair of mismatches in DNA. It is required for dam-dependent methyl-directed DNA mismatch repair. May act as a 'molecular matchmaker', a protein that promotes the formation of a stable complex between two or more DNA-binding proteins in an ATP-dependent manner without itself being part of a final effector complex. This chain is DNA mismatch repair protein MutL, found in Pseudomonas paraeruginosa (strain DSM 24068 / PA7) (Pseudomonas aeruginosa (strain PA7)).